Reading from the N-terminus, the 343-residue chain is tRNA N6-adenosine threonylcarbamoyltransferase (343 aa).

Fe cation-binding residues include His-120 and His-124. Residues 142-146 (VVSGG), Asp-175, Gly-188, Asp-192, and Asn-281 each bind substrate. Residue Asp-309 participates in Fe cation binding.

It belongs to the KAE1 / TsaD family. Fe(2+) serves as cofactor.

The protein resides in the cytoplasm. It carries out the reaction L-threonylcarbamoyladenylate + adenosine(37) in tRNA = N(6)-L-threonylcarbamoyladenosine(37) in tRNA + AMP + H(+). Its function is as follows. Required for the formation of a threonylcarbamoyl group on adenosine at position 37 (t(6)A37) in tRNAs that read codons beginning with adenine. Is involved in the transfer of the threonylcarbamoyl moiety of threonylcarbamoyl-AMP (TC-AMP) to the N6 group of A37, together with TsaE and TsaB. TsaD likely plays a direct catalytic role in this reaction. This Halalkalibacterium halodurans (strain ATCC BAA-125 / DSM 18197 / FERM 7344 / JCM 9153 / C-125) (Bacillus halodurans) protein is tRNA N6-adenosine threonylcarbamoyltransferase.